The chain runs to 151 residues: Putative pre-16S rRNA nuclease (151 aa).

This sequence belongs to the YqgF nuclease family.

The protein resides in the cytoplasm. Functionally, could be a nuclease involved in processing of the 5'-end of pre-16S rRNA. In Aster yellows witches'-broom phytoplasma (strain AYWB), this protein is Putative pre-16S rRNA nuclease.